A 716-amino-acid polypeptide reads, in one-letter code: Zinc finger protein 840 (716 aa).

Residues 42–113 (VRFRDVAVVF…EREVTGDPCP (72 aa)) enclose the KRAB domain. 18 consecutive C2H2-type zinc fingers follow at residues 151-173 (YECD…QKIH), 207-229 (FECN…QSMH), 235-257 (YKCD…QRFH), 277-299 (FSCN…LLIH), 305-327 (YTCN…QRTH), 333-355 (HKCD…QKTH), 361-383 (FSCN…QQIH), 389-411 (FICS…KGTH), 417-439 (YQCT…QKTH), 445-467 (FACN…KKIH), 473-495 (YECG…KKIH), 501-523 (FVCN…QRTH), 549-571 (FPCN…QQIH), 577-599 (FICS…KGTH), 605-627 (YQCT…QKTH), 633-655 (FTCN…KKIH), 661-683 (YECG…KKIH), and 689-711 (FVCN…QITH). The segment at 515–548 (KLSRHQRTHNKKENSSKSVSNLNKHQKTHAGEKP) is disordered.

It belongs to the krueppel C2H2-type zinc-finger protein family.

The protein resides in the nucleus. In terms of biological role, may be involved in transcriptional regulation. In Homo sapiens (Human), this protein is Zinc finger protein 840 (ZNF840P).